Reading from the N-terminus, the 62-residue chain is Prokaryotic ubiquitin-like protein Pup (62 aa).

Residues 1–36 (MEKSSQIHGSKPGDDNADEPENAAGQSQIRKQGADD) are disordered. The ARC ATPase binding stretch occupies residues 18–56 (DEPENAAGQSQIRKQGADDLLDEIDGLLESNAEEFVRSY). The residue at position 62 (glutamine 62) is a Deamidated glutamine. Glutamine 62 participates in a covalent cross-link: Isoglutamyl lysine isopeptide (Gln-Lys) (interchain with K-? in acceptor proteins).

The protein belongs to the prokaryotic ubiquitin-like protein family. As to quaternary structure, strongly interacts with the proteasome-associated ATPase ARC through a hydrophobic interface; the interacting region of Pup lies in its C-terminal half. There is one Pup binding site per ARC hexamer ring. In terms of processing, is modified by deamidation of its C-terminal glutamine to glutamate by the deamidase Dop, a prerequisite to the subsequent pupylation process.

It functions in the pathway protein degradation; proteasomal Pup-dependent pathway. Its function is as follows. Protein modifier that is covalently attached to lysine residues of substrate proteins, thereby targeting them for proteasomal degradation. The tagging system is termed pupylation. The protein is Prokaryotic ubiquitin-like protein Pup of Corynebacterium kroppenstedtii (strain DSM 44385 / JCM 11950 / CIP 105744 / CCUG 35717).